A 114-amino-acid polypeptide reads, in one-letter code: UPF0102 protein HPG27_782 (114 aa).

This sequence belongs to the UPF0102 family.

The sequence is that of UPF0102 protein HPG27_782 from Helicobacter pylori (strain G27).